The sequence spans 429 residues: MKKVLAIILGGGAGTRLYPLTKLRAKPAVPLAGKYRLIDIPLSNCINSEILKIYVLTQFNSASLNRHLTRTYNFTGFSDGFVEVLAAQQTAENPKWFQGTADAVRQYLWAFQEWDIDEYLILSGDHLYRMDYRDFIQRHRETGADITLSVVPIDEERASSFGLMKIDDHGRVVDFSEKPKGDELKQMQVDTTVLGLTPEQAKESPYIASMGIYVFKKEVLAQLLEENPDQTDFGKEIIPFSAKDYNLQAYLFKGYWEDIGTIKAFYEANLALNRQPSPRFSFYNEEYPIYTRSRYLPPTKALNCTITESMVSEGCILKDCRIHNSILGIRTRIEANCTIEDTMLMGADYYESPSLRESKAQEGKIPMGIGEGSTIRRAIVDKNARIGRNVTIVNKENIDESNQEESGFYIRNGIVVILKNATIADGTVI.

Residues G162, 177–178 (EK), and S209 contribute to the alpha-D-glucose 1-phosphate site.

It belongs to the bacterial/plant glucose-1-phosphate adenylyltransferase family. Homotetramer.

The enzyme catalyses alpha-D-glucose 1-phosphate + ATP + H(+) = ADP-alpha-D-glucose + diphosphate. Its pathway is glycan biosynthesis; glycogen biosynthesis. In terms of biological role, involved in the biosynthesis of ADP-glucose, a building block required for the elongation reactions to produce glycogen. Catalyzes the reaction between ATP and alpha-D-glucose 1-phosphate (G1P) to produce pyrophosphate and ADP-Glc. This is Glucose-1-phosphate adenylyltransferase from Rippkaea orientalis (strain PCC 8801 / RF-1) (Cyanothece sp. (strain PCC 8801)).